We begin with the raw amino-acid sequence, 297 residues long: Cbb3-type cytochrome c oxidase subunit CcoP (297 aa).

The Cytoplasmic segment spans residues 1 to 35 (MSKKPTTKKEVQTTGHQWDGIEELNTPLPRWWLWT). The helical transmembrane segment at 36-56 (FYATIIWGVAYSIAMPAWPIF) threads the bilayer. Topologically, residues 57–297 (SDKATPGLLG…SYVHSLGGGQ (241 aa)) are periplasmic. Cytochrome c domains are found at residues 108 to 199 (YTRN…LQIS) and 206 to 294 (VKAT…HSLG). Cys121, Cys124, His125, Met174, Cys219, Cys222, His223, and Met264 together coordinate heme c.

Belongs to the CcoP / FixP family. Component of the cbb3-type cytochrome c oxidase at least composed of CcoN, CcoO, CcoQ and CcoP. Interacts with CcoQ. Heme c is required as a cofactor.

The protein resides in the cell inner membrane. Its pathway is energy metabolism; oxidative phosphorylation. In terms of biological role, C-type cytochrome. Part of the cbb3-type cytochrome c oxidase complex. CcoP subunit is required for transferring electrons from donor cytochrome c via its heme groups to CcoO subunit. From there, electrons are shuttled to the catalytic binuclear center of CcoN subunit where oxygen reduction takes place. The complex also functions as a proton pump. In Rhodobacter capsulatus (Rhodopseudomonas capsulata), this protein is Cbb3-type cytochrome c oxidase subunit CcoP.